We begin with the raw amino-acid sequence, 512 residues long: Calcium-dependent protein kinase 18 (512 aa).

The interval 1–25 (MGLCSSSSARRDAGTPGGGNGAGNK) is disordered. The N-myristoyl glycine moiety is linked to residue Gly2. A Protein kinase domain is found at 52–312 (YALGKLLGHG…AAQALSHEWV (261 aa)). Residues 58 to 66 (LGHGQFGYT) and Lys81 each bind ATP. The Proton acceptor role is filled by Asp178. The interval 318–348 (ASDIPLDISVLHNMRQFVKYSRFKQFALRAL) is autoinhibitory domain. 4 EF-hand domains span residues 355-390 (EELS…DVPW), 392-427 (LKGP…VHQL), 434-469 (KWKS…KGSI), and 472-499 (LLEE…ASMS). The Ca(2+) site is built by Asp368, Asp370, Asn372, Thr374, Glu379, Asp405, Asn407, Asp409, Glu416, Asp447, Asp449, Asp451, Tyr453, Glu458, Asp477, Asp479, Asp481, Lys483, and Glu488.

Belongs to the protein kinase superfamily. Ser/Thr protein kinase family. CDPK subfamily. In terms of assembly, interacts with MPK5. Autophosphorylated. Phosphorylated by MPK5.

The protein localises to the cell membrane. The catalysed reaction is L-seryl-[protein] + ATP = O-phospho-L-seryl-[protein] + ADP + H(+). It carries out the reaction L-threonyl-[protein] + ATP = O-phospho-L-threonyl-[protein] + ADP + H(+). Its activity is regulated as follows. Activated by calcium. Autophosphorylation may play an important role in the regulation of the kinase activity. May play a role in signal transduction pathways that involve calcium as a second messenger. Functions upstream of MPK5 in a signaling pathway that represses defense gene expression and negatively regulates resistance to rice blast fungus. Phosphorylates MPK5 at Thr-14 and Thr-32 and activates MPK5 independently of MAP kinase kinase (MKK) phosphorylation. May be involved in arbuscular mycorrhizal presymbiotic phase signaling. Phosphorylates the elicitor-responsive protein ERG1 in vitro. Phosphorylation is calcium-dependent. This is Calcium-dependent protein kinase 18 from Oryza sativa subsp. japonica (Rice).